The chain runs to 346 residues: Nitrilase 1 (346 aa).

Ser2 is modified (N-acetylserine). The CN hydrolase domain maps to 25-297 (VRVTIVQSST…EGLVTADIDL (273 aa)). Glu65 serves as the catalytic Proton acceptor. Catalysis depends on Lys152, which acts as the Proton donor. The active-site Nucleophile is Cys186.

This sequence belongs to the carbon-nitrogen hydrolase superfamily. Nitrilase family. Interacts with DEK3. In terms of tissue distribution, expressed in cotyledons, hypocotyls, leaves, roots, stems, flowers and siliques.

It carries out the reaction a nitrile + 2 H2O = a carboxylate + NH4(+). In terms of biological role, can convert indole-3-acetonitrile to the plant hormone indole-3-acetic acid. The sequence is that of Nitrilase 1 from Arabidopsis thaliana (Mouse-ear cress).